The chain runs to 250 residues: Ribonuclease HII (250 aa).

One can recognise an RNase H type-2 domain in the interval 66–250 (QLVAGVDEVG…SFAPVSEYEK (185 aa)). Residues aspartate 72, glutamate 73, and aspartate 164 each contribute to the a divalent metal cation site.

This sequence belongs to the RNase HII family. Mn(2+) serves as cofactor. Requires Mg(2+) as cofactor.

Its subcellular location is the cytoplasm. The catalysed reaction is Endonucleolytic cleavage to 5'-phosphomonoester.. Functionally, endonuclease that specifically degrades the RNA of RNA-DNA hybrids. This is Ribonuclease HII from Lactobacillus johnsonii (strain CNCM I-12250 / La1 / NCC 533).